Consider the following 166-residue polypeptide: NAD(P)H-quinone oxidoreductase subunit I, chloroplastic (166 aa).

4Fe-4S ferredoxin-type domains lie at 55 to 84 and 95 to 124; these read GRIH…VDWK and LNYS…MTEE. [4Fe-4S] cluster contacts are provided by C64, C67, C70, C74, C104, C107, C110, and C114.

The protein belongs to the complex I 23 kDa subunit family. NDH is composed of at least 16 different subunits, 5 of which are encoded in the nucleus. Requires [4Fe-4S] cluster as cofactor.

It localises to the plastid. The protein localises to the chloroplast thylakoid membrane. It carries out the reaction a plastoquinone + NADH + (n+1) H(+)(in) = a plastoquinol + NAD(+) + n H(+)(out). It catalyses the reaction a plastoquinone + NADPH + (n+1) H(+)(in) = a plastoquinol + NADP(+) + n H(+)(out). NDH shuttles electrons from NAD(P)H:plastoquinone, via FMN and iron-sulfur (Fe-S) centers, to quinones in the photosynthetic chain and possibly in a chloroplast respiratory chain. The immediate electron acceptor for the enzyme in this species is believed to be plastoquinone. Couples the redox reaction to proton translocation, and thus conserves the redox energy in a proton gradient. In Chamaechaenactis scaposa (Fullstem), this protein is NAD(P)H-quinone oxidoreductase subunit I, chloroplastic.